The following is a 323-amino-acid chain: Fos-related antigen 2 (323 aa).

A compositionally biased stretch (low complexity) spans 1–27 (MYQDYPGSFDTSSRGSSGSPGHPEPYS). The disordered stretch occupies residues 1–31 (MYQDYPGSFDTSSRGSSGSPGHPEPYSAGAA). The bZIP domain occupies 124–187 (EEKRRIRRER…EKLEFMLVAH (64 aa)). The interval 126–128 (KRR) is basic motif. The segment at 129–136 (IRRERNKL) is leucine-zipper. Disordered regions lie at residues 194–214 (SPEE…TGAS) and 288–323 (ESPL…LLAL). Low complexity predominate over residues 305 to 317 (SSSGDQSSDSLNS).

Belongs to the bZIP family. Fos subfamily. As to quaternary structure, heterodimer with JUN.

It is found in the nucleus. The sequence is that of Fos-related antigen 2 (FOSL2) from Gallus gallus (Chicken).